A 352-amino-acid chain; its full sequence is Biotin synthase (352 aa).

The region spanning 44–262 is the Radical SAM core domain; sequence NRVQVSTLLS…LAVARIMMPK (219 aa). The [4Fe-4S] cluster site is built by Cys59, Cys63, and Cys66. Residues Cys103, Cys134, Cys194, and Arg266 each coordinate [2Fe-2S] cluster.

The protein belongs to the radical SAM superfamily. Biotin synthase family. As to quaternary structure, homodimer. [4Fe-4S] cluster is required as a cofactor. It depends on [2Fe-2S] cluster as a cofactor.

It carries out the reaction (4R,5S)-dethiobiotin + (sulfur carrier)-SH + 2 reduced [2Fe-2S]-[ferredoxin] + 2 S-adenosyl-L-methionine = (sulfur carrier)-H + biotin + 2 5'-deoxyadenosine + 2 L-methionine + 2 oxidized [2Fe-2S]-[ferredoxin]. It functions in the pathway cofactor biosynthesis; biotin biosynthesis; biotin from 7,8-diaminononanoate: step 2/2. Its function is as follows. Catalyzes the conversion of dethiobiotin (DTB) to biotin by the insertion of a sulfur atom into dethiobiotin via a radical-based mechanism. This Pseudomonas aeruginosa (strain LESB58) protein is Biotin synthase.